A 277-amino-acid polypeptide reads, in one-letter code: uncharacterized protein (277 aa).

Disordered regions lie at residues Pro1 to Pro103 and Pro254 to Arg277. The span at Arg48 to Thr65 shows a compositional bias: basic and acidic residues. Residues Pro66 to Val77 show a composition bias toward polar residues. Positions Pro82–Gln91 are enriched in basic residues.

This is an uncharacterized protein from Homo sapiens (Human).